The chain runs to 538 residues: Ribosome-associated complex subunit SSZ1 (538 aa).

Residues 400 to 538 are peptide-binding domain; sequence PVIVNTPHLK…KTGNAVKGEL (139 aa). A disordered region spans residues 464–484; it reads PIPKEENAEEDDESEWSDDEP. A compositionally biased stretch (acidic residues) spans 470–484; sequence NAEEDDESEWSDDEP. Phosphoserine is present on residues Ser-477 and Ser-480.

The protein belongs to the heat shock protein 70 family. In terms of assembly, RAC is a heterodimer of the Hsp70/DnaK-type chaperone SSZ1 and the Hsp40/DnaJ-type chaperone ZUO1. RAC associates with ribosomes via ZUO1.

The protein resides in the cytoplasm. Component of the ribosome-associated complex (RAC), a heterodimeric chaperone complex involved in regulation of accurate translation termination and in folding or maintaining nascent polypeptides in a folding-competent state. RAC stimulates the ATPase activity of the ribosome-associated pool of Hsp70-type chaperones SSB1/SSB2 that bind to the nascent polypeptide chain. SSZ1 is required for ZUO1 to function efficiently as a J-protein for SSB1/SSB2. Also involved in pleiotropic drug resistance by post-translational activation of transcription factor PDR1. The protein is Ribosome-associated complex subunit SSZ1 (SSZ1) of Saccharomyces cerevisiae (strain ATCC 204508 / S288c) (Baker's yeast).